The chain runs to 368 residues: MSAQSVEEDSILIIPTPDEEEKILRVKLEEDPDGEEGSSIPWNHLPDPEIFRQRFRQFGYQDSPGPREAVSQLRELCRLWLRPETHTKEQILELVVLEQFVAILPKELQTWVRDHHPENGEEAVTVLEDLESELDDPGQPVSLRRRKREVLVEDMVSQEEAQGLPSSELDAVENQLKWASWELHSLRHCDDDGRTENGALAPKQELPSAVESHEVPGTLNMGVPQIFKYGETCFPKGRFERKRNPSRKKQHICDECGKHFSQGSALILHQRIHSGEKPYGCVECGKAFSRSSILVQHQRVHTGEKPYKCLECGKAFSQNSGLINHQRIHTGEKPYECVQCGKSYSQSSNLFRHQRRHNAEKLLNVVKV.

A Glycyl lysine isopeptide (Lys-Gly) (interchain with G-Cter in SUMO2) cross-link involves residue Lys-22. Lys-27 participates in a covalent cross-link: Glycyl lysine isopeptide (Lys-Gly) (interchain with G-Cter in SUMO1); alternate. Lys-27 is covalently cross-linked (Glycyl lysine isopeptide (Lys-Gly) (interchain with G-Cter in SUMO2); alternate). One can recognise an SCAN box domain in the interval 52-134; sequence RQRFRQFGYQ…TVLEDLESEL (83 aa). Phosphoserine occurs at positions 132 and 142. Residues Lys-147, Lys-177, and Lys-236 each participate in a glycyl lysine isopeptide (Lys-Gly) (interchain with G-Cter in SUMO2) cross-link. Residues 251–273 form a C2H2-type 1 zinc finger; it reads HICDECGKHFSQGSALILHQRIH. The interval 251–301 is necessary and sufficient for nuclear localization; that stretch reads HICDECGKHFSQGSALILHQRIHSGEKPYGCVECGKAFSRSSILVQHQRVH. At Ser-274 the chain carries Phosphoserine. Glycyl lysine isopeptide (Lys-Gly) (interchain with G-Cter in SUMO2) cross-links involve residues Lys-277 and Lys-286. 3 C2H2-type zinc fingers span residues 279–301, 307–329, and 335–357; these read YGCV…QRVH, YKCL…QRIH, and YECV…QRRH. Phosphoserine is present on Ser-292. Tyr-335 bears the Phosphotyrosine mark. Glycyl lysine isopeptide (Lys-Gly) (interchain with G-Cter in SUMO2) cross-links involve residues Lys-361 and Lys-367.

It belongs to the krueppel C2H2-type zinc-finger protein family. Sumoylated.

Its subcellular location is the nucleus. Transcription factor required for myelination of differentiated oligodendrocytes. Required for the conversion of oligodendrocytes from the premyelinating to the myelinating state. In the developing central nervous system (CNS), involved in the maintenance in the progenitor stage by promoting the cell cycle. Specifically binds to the 5'-TCAT-3' DNA sequence. Has transcription repressor activity in vitro. This Pongo abelii (Sumatran orangutan) protein is Zinc finger protein 24 (ZNF24).